Consider the following 206-residue polypeptide: uncharacterized protein (206 aa).

The tract at residues 147 to 206 (REEKAQKSKSKSRNQDERGSPLDERLGPKVSDLTLMERIFQVRRKPRKSRRDRRSRVSKR) is disordered. The span at 159–173 (RNQDERGSPLDERLG) shows a compositional bias: basic and acidic residues. The segment covering 187 to 206 (QVRRKPRKSRRDRRSRVSKR) has biased composition (basic residues).

This is an uncharacterized protein from Schizosaccharomyces pombe (strain 972 / ATCC 24843) (Fission yeast).